We begin with the raw amino-acid sequence, 218 residues long: MPLVVKICGLSTRATLDAALAAGADMVGFVVFPASPRHVDLALARQLGDATGDRAAKVALTVDADDALLESVIETLRPDILQLHGHESAARVAEIRRTFGLPVMKVLGVASAADLAPLPDYAAVADRILFDARAPKGASRPGGLGAVFDWQLLRDLDLALPFMVSGGLTADNVAEAVRITGAGGVDISSGVETAPGVKDPDLIRAFIRAARASQELMI.

The protein belongs to the TrpF family.

It carries out the reaction N-(5-phospho-beta-D-ribosyl)anthranilate = 1-(2-carboxyphenylamino)-1-deoxy-D-ribulose 5-phosphate. It participates in amino-acid biosynthesis; L-tryptophan biosynthesis; L-tryptophan from chorismate: step 3/5. This Rhodopseudomonas palustris (strain BisB18) protein is N-(5'-phosphoribosyl)anthranilate isomerase.